Reading from the N-terminus, the 314-residue chain is MSNQQTHVRKPDWLKTRINTNKSYRNLKKLMRDNRLNTVCEEARCPNLHECWSERKTATFMILGDTCTRGCRFCAVKTGLPNELDWGEPERVADSVTVMGLKHVVVTAVARDDLNDGGAAVFAETVRAIRRKNPGCTIEILPSDMKGDYESLHTLMDSGPDIFNHNIETVRRLTKRVRARAMYDRSLELLRRVKEIAPNTPTKSSIMVGLGEEKDEIIQAMDDLLAHNVDIVTLGQYLQPTKKHLEVVRYYHPDEFEELKNIALEKGFSHCESGPLVRSSYHADEQVSNAAAQRRIKYMKGVEKQENSQLDFNF.

[4Fe-4S] cluster contacts are provided by Cys40, Cys45, Cys51, Cys67, Cys71, Cys74, and Ser280. Residues 53–269 (SERKTATFMI…KNIALEKGFS (217 aa)) form the Radical SAM core domain.

It belongs to the radical SAM superfamily. Lipoyl synthase family. [4Fe-4S] cluster is required as a cofactor.

It localises to the cytoplasm. It carries out the reaction [[Fe-S] cluster scaffold protein carrying a second [4Fe-4S](2+) cluster] + N(6)-octanoyl-L-lysyl-[protein] + 2 oxidized [2Fe-2S]-[ferredoxin] + 2 S-adenosyl-L-methionine + 4 H(+) = [[Fe-S] cluster scaffold protein] + N(6)-[(R)-dihydrolipoyl]-L-lysyl-[protein] + 4 Fe(3+) + 2 hydrogen sulfide + 2 5'-deoxyadenosine + 2 L-methionine + 2 reduced [2Fe-2S]-[ferredoxin]. It participates in protein modification; protein lipoylation via endogenous pathway; protein N(6)-(lipoyl)lysine from octanoyl-[acyl-carrier-protein]. In terms of biological role, catalyzes the radical-mediated insertion of two sulfur atoms into the C-6 and C-8 positions of the octanoyl moiety bound to the lipoyl domains of lipoate-dependent enzymes, thereby converting the octanoylated domains into lipoylated derivatives. The polypeptide is Lipoyl synthase (Oceanobacillus iheyensis (strain DSM 14371 / CIP 107618 / JCM 11309 / KCTC 3954 / HTE831)).